A 391-amino-acid chain; its full sequence is Multidrug resistance protein MdtL (391 aa).

Topologically, residues 1–3 are cytoplasmic; sequence MSR. A helical transmembrane segment spans residues 4-24; the sequence is FLICSFALVLLYPAGIDMYLV. Topologically, residues 25 to 37 are periplasmic; that stretch reads GLPRIAADLNASE. Residues 38-58 form a helical membrane-spanning segment; the sequence is AQLHIAFSVYLAGMAAAMLFA. Residues 59–75 lie on the Cytoplasmic side of the membrane; that stretch reads GKMADRSGRKPVAIPGS. A helical transmembrane segment spans residues 76-96; that stretch reads ALFIIASVFCSLAETSTLFLA. Over 97–98 the chain is Periplasmic; that stretch reads GR. Residues 99–119 traverse the membrane as a helical segment; sequence FLQGLGAGCCYVVAFAILRDT. Residues 120–130 lie on the Cytoplasmic side of the membrane; the sequence is LDDRRRAKVLS. The helical transmembrane segment at 131-151 threads the bilayer; the sequence is LLNGITCIIPVLAPVLGHLIM. The Periplasmic portion of the chain corresponds to 152–157; sequence LKFPWQ. The helical transmembrane segment at 158-178 threads the bilayer; sequence SLFWAMAMMGIAVLMLSLFIL. Residues 179–202 lie on the Cytoplasmic side of the membrane; sequence KETRPASPAASDKPRENSESLLNR. A helical membrane pass occupies residues 203 to 222; it reads FFLSRVVITTLSVSVILTFV. Over 223–244 the chain is Periplasmic; that stretch reads NTSPVLLMEIMGFERGEYATIM. Residues 245 to 265 form a helical membrane-spanning segment; sequence ALTAGVSMTFSFSTPFALGIF. Topologically, residues 266–268 are cytoplasmic; the sequence is KPR. The helical transmembrane segment at 269–289 threads the bilayer; that stretch reads TLMITSQVLFLAAGITLAVSP. Residues 290 to 292 lie on the Periplasmic side of the membrane; sequence SHA. The chain crosses the membrane as a helical span at residues 293–313; the sequence is VSLFGITLICAGFSVGFGVAM. Topologically, residues 314–330 are cytoplasmic; sequence SQALGPFSLRAGVASST. The helical transmembrane segment at 331-351 threads the bilayer; that stretch reads LGIAQVCGSSLWIWLAAVVGI. At 352 to 355 the chain is on the periplasmic side; the sequence is GAWN. Residues 356 to 376 form a helical membrane-spanning segment; the sequence is MLIGILIACSIVSLLLIMFVA. Residues 377–391 are Cytoplasmic-facing; sequence PGRPVAAHEEIHHHA.

Belongs to the major facilitator superfamily. DHA1 family. MdtL (TC 2.A.1.2.22) subfamily.

Its subcellular location is the cell inner membrane. The sequence is that of Multidrug resistance protein MdtL from Shigella flexneri serotype 5b (strain 8401).